Consider the following 501-residue polypeptide: Phytoene desaturase (lycopene-forming) (501 aa).

Residue 12–45 (IVIGAGFGGLALAIRLQSAGIATTLVEARDKPGG) participates in FAD binding.

The protein belongs to the carotenoid/retinoid oxidoreductase family. The cofactor is FAD.

It catalyses the reaction 15-cis-phytoene + 4 A = all-trans-lycopene + 4 AH2. It functions in the pathway carotenoid biosynthesis; astaxanthin biosynthesis. Functionally, this enzyme converts phytoene into lycopene via the intermediaries of phytofluene, zeta-carotene and neurosporene by the introduction of four double bonds. In Paracoccus sp. (strain N81106 / MBIC 01143) (Agrobacterium aurantiacum), this protein is Phytoene desaturase (lycopene-forming) (crtI).